The following is a 98-amino-acid chain: PsbF-like protein (98 aa).

Helical transmembrane passes span 5-25 (VLLV…WLGK) and 73-93 (TAAV…ILAM).

Belongs to the PsbE/PsbF family.

It is found in the membrane. Its function is as follows. Unknown. Resembles PsbF, one of the subunits of the photosystem II reaction center. However, it encodes asparagine rather than histidine at the site PsbF uses to bind heme. This Prochlorococcus marinus (strain MIT 9312) protein is PsbF-like protein.